The chain runs to 397 residues: Mesoderm posterior protein 2 (397 aa).

Disordered stretches follow at residues 28 to 92, 152 to 208, 222 to 295, and 351 to 376; these read WDST…REKL, QRGD…GRRP, SPSA…VPWT, and PNSEDQGPGAAFQLSEASPPQSSGLR. Low complexity-rich tracts occupy residues 32 to 48 and 58 to 71; these read SPASSSDSSGSCPCDGA and SCSSRAAEAAATTP. The region spanning 81 to 135 is the bHLH domain; that stretch reads GQRQSASEREKLRMRTLARALHELRRFLPPSLAPAGQSLTKIETLRLAIRYIGHL. Repeat copies occupy residues 179–180, 181–182, 183–184, 185–186, 187–188, 189–190, 191–192, 193–194, 195–196, 197–198, 199–200, 201–202, and 203–204. The segment at 179-204 is 13 X 2 AA tandem repeats of G-Q; the sequence is GQGQGQGQGQGQGQGQGQGQGQGQGQ. Residues 180–206 are compositionally biased toward gly residues; the sequence is QGQGQGQGQGQGQGQGQGQGQGQGQGR. The segment covering 235–244 has biased composition (basic and acidic residues); sequence RLGRGVHDTD. 2 stretches are compositionally biased toward polar residues: residues 258 to 270 and 365 to 375; these read PPYSSQGTTSDAS and SEASPPQSSGL.

Post-translationally, degraded by the proteasome.

The protein localises to the nucleus. Transcription factor with important role in somitogenesis. Defines the rostrocaudal patterning of the somite by participating in distinct Notch pathways. Also regulates the FGF signaling pathway. Specifies the rostral half of the somites. Generates rostro-caudal polarity of somites by down-regulating in the presumptive rostral domain DLL1, a Notch ligand. Participates in the segment border formation by activating in the anterior presomitic mesoderm LFNG, a negative regulator of DLL1-Notch signaling. Acts as a strong suppressor of Notch activity. Together with MESP1 is involved in the epithelialization of somitic mesoderm and in the development of cardiac mesoderm. The polypeptide is Mesoderm posterior protein 2 (MESP2) (Homo sapiens (Human)).